The chain runs to 348 residues: Phosphate acyltransferase (348 aa).

It belongs to the PlsX family. Homodimer. Probably interacts with PlsY.

It is found in the cytoplasm. The catalysed reaction is a fatty acyl-[ACP] + phosphate = an acyl phosphate + holo-[ACP]. Its pathway is lipid metabolism; phospholipid metabolism. Catalyzes the reversible formation of acyl-phosphate (acyl-PO(4)) from acyl-[acyl-carrier-protein] (acyl-ACP). This enzyme utilizes acyl-ACP as fatty acyl donor, but not acyl-CoA. The sequence is that of Phosphate acyltransferase from Rhizorhabdus wittichii (strain DSM 6014 / CCUG 31198 / JCM 15750 / NBRC 105917 / EY 4224 / RW1) (Sphingomonas wittichii).